Consider the following 45-residue polypeptide: Sperm-specific protein Phi-3 (45 aa).

The disordered stretch occupies residues 1 to 45 (AKAKRSPRKKKAAVKKSSKSKAKKPKSPKKKKAAKKPAKKAAKKK).

It is found in the nucleus. The protein localises to the chromosome. Its function is as follows. Involved in nuclear basic protein transition: histones are replaced by spermatid specific proteins which are themselves replaced by protamines in late spermatids. The polypeptide is Sperm-specific protein Phi-3 (Mytilus californianus (California mussel)).